Here is a 900-residue protein sequence, read N- to C-terminus: DNA polymerase nu (900 aa).

Over residues 60–75 (LEDRKTQSPEKKDLKS) the composition is skewed to basic and acidic residues. Disordered regions lie at residues 60-90 (LEDR…LSPQ) and 863-900 (GPPP…SFCL). The segment covering 76 to 90 (LRSQTSRGSAKLSPQ) has biased composition (polar residues).

It belongs to the DNA polymerase type-A family. As to quaternary structure, interacts with FANCD2, FANCI, PCNA, RAD51 and HELQ. As to expression, highly expressed in testis and heart. Weakly expressed in skeletal muscle.

The protein localises to the nucleus. The catalysed reaction is DNA(n) + a 2'-deoxyribonucleoside 5'-triphosphate = DNA(n+1) + diphosphate. With respect to regulation, inhibited by ddTTP. Its function is as follows. DNA polymerase with very low fidelity that catalyzes considerable misincorporation by inserting dTTP opposite a G template, and dGTP opposite a T template. Is the least accurate of the DNA polymerase A family (i.e. POLG, POLN and POLQ). Can perform accurate translesion DNA synthesis (TLS) past a 5S-thymine glycol. Can perform efficient strand displacement past a nick or a gap and gives rise to an amount of product similar to that on non-damaged template. Has no exonuclease activity. Error-prone DNA polymerase that preferentially misincorporates dT regardless of template sequence. May play a role in TLS during interstrand cross-link (ICL) repair. May be involved in TLS when genomic replication is blocked by extremely large major groove DNA lesions. May function in the bypass of some DNA-protein and DNA-DNA cross-links. May have a role in cellular tolerance to DNA cross-linking agents. Involved in the repair of DNA cross-links and double-strand break (DSB) resistance. Participates in FANCD2-mediated repair. Forms a complex with HELQ helicase that participates in homologous recombination (HR) repair and is essential for cellular protection against DNA cross-links. The polypeptide is DNA polymerase nu (POLN) (Homo sapiens (Human)).